A 548-amino-acid polypeptide reads, in one-letter code: Membrane protein insertase YidC (548 aa).

A helical transmembrane segment spans residues 6 to 26 (NLFLIAFLFVSFMIWQAWQTD). Residues 30 to 53 (QPLQTQTTQNTTSAAGDAVNQGVP) form a disordered region. 4 consecutive transmembrane segments (helical) span residues 345-365 (KFLHGFIGNWGFSIIVITFIV), 420-440 (LGGCLPLVIQMPIFLALYYML), 458-478 (LAAQDPYYILPILMGVTMFFI), and 499-519 (PVIFTVFFLWFPSGLVLYYIV).

The protein belongs to the OXA1/ALB3/YidC family. Type 1 subfamily. As to quaternary structure, interacts with the Sec translocase complex via SecD. Specifically interacts with transmembrane segments of nascent integral membrane proteins during membrane integration.

Its subcellular location is the cell inner membrane. Its function is as follows. Required for the insertion and/or proper folding and/or complex formation of integral membrane proteins into the membrane. Involved in integration of membrane proteins that insert both dependently and independently of the Sec translocase complex, as well as at least some lipoproteins. Aids folding of multispanning membrane proteins. The polypeptide is Membrane protein insertase YidC (Erwinia tasmaniensis (strain DSM 17950 / CFBP 7177 / CIP 109463 / NCPPB 4357 / Et1/99)).